The chain runs to 1358 residues: DNA-directed RNA polymerase subunit beta (1358 aa).

The span at Q1033 to G1051 shows a compositional bias: basic and acidic residues. Residues Q1033 to L1053 form a disordered region.

Belongs to the RNA polymerase beta chain family. In terms of assembly, the RNAP catalytic core consists of 2 alpha, 1 beta, 1 beta' and 1 omega subunit. When a sigma factor is associated with the core the holoenzyme is formed, which can initiate transcription.

The catalysed reaction is RNA(n) + a ribonucleoside 5'-triphosphate = RNA(n+1) + diphosphate. DNA-dependent RNA polymerase catalyzes the transcription of DNA into RNA using the four ribonucleoside triphosphates as substrates. The protein is DNA-directed RNA polymerase subunit beta of Marinobacter nauticus (strain ATCC 700491 / DSM 11845 / VT8) (Marinobacter aquaeolei).